The chain runs to 773 residues: MDVTSSSGGGGDPRQIEETKPLLGGDVSAPEGTKMGAVPCRRALLLCNGMRYKLLQEGDIQVCVIRHPRTFLSKILTSKFLRRWEPHHLTLADNSLASATPTGYMENSVSYSAIEDVQLLSWENAPKYCLQLTIPGGTVLLQAANSYLRDQWFHSLQWKKKIYKYKKVLSNPSRWEVVLKEIRTLVDMALTSPLQDDSINQAPLEIVSKLLSENTNLTTQEHENIIVAIAPLLENNHPPPDLCEFFCKHCRERPRSMVVIEVFTPVVQRILKHNMDFGKCPRLRLFTQEYILALNELNAGMEVVKKFIQSMHGPTGHCPHPRVLPNLVAVCLAAIYSCYEEFINSRDNSPSLKEIRNGCQQPCDRKPTLPLRLLHPSPDLVSQEATLSEARLKSVVVASSEIHVEVERTSTAKPALTASAGNDSEPNLIDCLMVSPACSTMSIELGPQADRTLGCYVEILKLLSDYDDWRPSLASLLQPIPFPKEALAHEKFTKELKYVIQRFAEDPRQEVHSCLLSVRAGKDGWFQLYSPGGVACDDDGELFASMVHILMGSCYKTKKFLLSLAENKLGPCMLLALRGNQTMVEILCLMLEYNIIDNNDTQLQIISTLESTDVGKRMYEQLCDRQRELKELQRKGGPTRLTLPSKSTDADLARLLSSGSFGNLENLSLAFTNVTSACAEHLIKLPSLKQLNLWSTQFGDAGLRLLSEHLTMLQVLNLCETPVTDAGLLALSSMKSLCSLNMNSTKLSADTYEDLKAKLPNLKEVDVRYTEAW.

Residues 1-30 (MDVTSSSGGGGDPRQIEETKPLLGGDVSAP) are disordered. Residues 54 to 163 (LLQEGDIQVC…HSLQWKKKIY (110 aa)) enclose the PH domain. Phosphoserine occurs at positions 349, 377, 382, and 660. LRR repeat units lie at residues 663–686 (NLEN…IKLP), 687–707 (SLKQ…RLLS), 712–732 (MLQV…LALS), and 736–756 (SLCS…EDLK).

In terms of assembly, interacts with FLNA. Isoform 1 is expressed in peripheral blood mononuclear cells and kidney. Lower expression in brain and liver. Expression is down-regulated in activated cells. Isoform 2 is expressed in lymphocyte precursors, however, expression shuts down during maturation and differentiation in thymus and fetal liver.

It is found in the nucleus. The protein resides in the cytoplasm. In terms of biological role, plays a role in T-cell signaling pathway. Isoform 2 may play a role in T-helper 2 (Th2) signaling pathway and seems to represent the first proximal signaling protein that links T-cell receptor-mediated signal to the activation of c-Maf Th2 specific factor. The polypeptide is C-Maf-inducing protein (CMIP) (Homo sapiens (Human)).